Here is a 269-residue protein sequence, read N- to C-terminus: Type II iodothyronine deiodinase (269 aa).

Topologically, residues 1-7 (MGLLSVD) are lumenal. The chain crosses the membrane as a helical; Signal-anchor for type III membrane protein span at residues 8 to 28 (LLITLQILPWFFSNCLFLALY). Over 29-269 (DSVVLLKHVI…RUVPTCELIM (241 aa)) the chain is Cytoplasmic. Sec-128 is an active-site residue. Non-standard amino acids (selenocysteine) are located at Sec-128 and Sec-261.

The protein belongs to the iodothyronine deiodinase family. As to quaternary structure, predominantly monomer. Can form homodimers but homodimerization is not essential for enzyme activity.

Its subcellular location is the endoplasmic reticulum membrane. It catalyses the reaction 3,3',5-triiodo-L-thyronine + iodide + A + H(+) = L-thyroxine + AH2. The enzyme catalyses 3,3'-diiodo-L-thyronine + iodide + A + H(+) = 3,3',5'-triiodo-L-thyronine + AH2. It carries out the reaction 3'-iodo-L-thyronine + iodide + A + H(+) = 3',5'-diiodo-L-thyronine + AH2. The catalysed reaction is 3,3'-diiodothyronamine + iodide + A + H(+) = 3,3',5'-triiodothyronamine + AH2. It catalyses the reaction 3'-iodothyronamine + iodide + A + H(+) = 3',5'-diiodothyronamine + AH2. Its function is as follows. Plays a crucial role in the metabolism of thyroid hormones (TH) and has specific roles in TH activation and inactivation by deiodination. Catalyzes the deiodination of L-thyroxine (T4) to 3,5,3'-triiodothyronine (T3), 3,3',5'-triiodothyronine (rT3) to 3,3'-diiodothyronine (3,3'-T2) and 3',5'-diiodothyronine (3',5'-T2) to 3'-monoiodothyronine (3'-T1) via outer-ring deiodination (ORD). Catalyzes the phenolic ring deiodinations of 3,3',5'-triiodothyronamine and 3',5'- diiodothyronamine. The chain is Type II iodothyronine deiodinase (dio2) from Neoceratodus forsteri (Australian lungfish).